A 480-amino-acid chain; its full sequence is ATP synthase subunit beta (480 aa).

153–160 is a binding site for ATP; that stretch reads GGAGVGKT.

Belongs to the ATPase alpha/beta chains family. In terms of assembly, F-type ATPases have 2 components, CF(1) - the catalytic core - and CF(0) - the membrane proton channel. CF(1) has five subunits: alpha(3), beta(3), gamma(1), delta(1), epsilon(1). CF(0) has three main subunits: a(1), b(2) and c(9-12). The alpha and beta chains form an alternating ring which encloses part of the gamma chain. CF(1) is attached to CF(0) by a central stalk formed by the gamma and epsilon chains, while a peripheral stalk is formed by the delta and b chains.

It is found in the cell membrane. It catalyses the reaction ATP + H2O + 4 H(+)(in) = ADP + phosphate + 5 H(+)(out). Functionally, produces ATP from ADP in the presence of a proton gradient across the membrane. The catalytic sites are hosted primarily by the beta subunits. The protein is ATP synthase subunit beta of Lactobacillus gasseri (strain ATCC 33323 / DSM 20243 / BCRC 14619 / CIP 102991 / JCM 1131 / KCTC 3163 / NCIMB 11718 / NCTC 13722 / AM63).